The primary structure comprises 377 residues: Aspartate aminotransferase (377 aa).

The L-aspartate site is built by Gly37, Trp123, and Asn173. Residue Lys234 is modified to N6-(pyridoxal phosphate)lysine. Position 353 (Arg353) interacts with L-aspartate.

The protein belongs to the class-I pyridoxal-phosphate-dependent aminotransferase family. As to quaternary structure, homodimer. The cofactor is pyridoxal 5'-phosphate.

It is found in the cytoplasm. The enzyme catalyses L-aspartate + 2-oxoglutarate = oxaloacetate + L-glutamate. In Thermotoga maritima (strain ATCC 43589 / DSM 3109 / JCM 10099 / NBRC 100826 / MSB8), this protein is Aspartate aminotransferase (aspC).